The chain runs to 206 residues: N-(5'-phosphoribosyl)anthranilate isomerase (206 aa).

The protein belongs to the TrpF family.

It carries out the reaction N-(5-phospho-beta-D-ribosyl)anthranilate = 1-(2-carboxyphenylamino)-1-deoxy-D-ribulose 5-phosphate. It participates in amino-acid biosynthesis; L-tryptophan biosynthesis; L-tryptophan from chorismate: step 3/5. The protein is N-(5'-phosphoribosyl)anthranilate isomerase of Pseudomonas syringae pv. syringae (strain B728a).